Reading from the N-terminus, the 197-residue chain is Phospholipid hydroperoxide glutathione peroxidase (197 aa).

Phosphoserine is present on Ser-40. The active site involves Sec-73. Position 73 (Sec-73) is a non-standard amino acid, selenocysteine.

This sequence belongs to the glutathione peroxidase family. In terms of assembly, monomer. Has a tendency to form higher mass oligomers. Interacts with FUNDC1; this interaction promotes GPX4 recruitment into mitochondria through TOM/TIM complex where it is degraded by mitophagy.

It is found in the mitochondrion. Its subcellular location is the cytoplasm. The enzyme catalyses a hydroperoxy polyunsaturated fatty acid + 2 glutathione = a hydroxy polyunsaturated fatty acid + glutathione disulfide + H2O. It catalyses the reaction 2 glutathione + H2O2 = glutathione disulfide + 2 H2O. It carries out the reaction tert-butyl hydroperoxide + 2 glutathione = tert-butanol + glutathione disulfide + H2O. The catalysed reaction is cumene hydroperoxide + 2 glutathione = 2-phenylpropan-2-ol + glutathione disulfide + H2O. The enzyme catalyses (9S)-hydroperoxy-(10E,12Z)-octadecadienoate + 2 glutathione = (9S)-hydroxy-(10E,12Z)-octadecadienoate + glutathione disulfide + H2O. It catalyses the reaction (13S)-hydroperoxy-(9Z,11E)-octadecadienoate + 2 glutathione = (13S)-hydroxy-(9Z,11E)-octadecadienoate + glutathione disulfide + H2O. It carries out the reaction (5S)-hydroperoxy-(6E,8Z,11Z,14Z)-eicosatetraenoate + 2 glutathione = (5S)-hydroxy-(6E,8Z,11Z,14Z)-eicosatetraenoate + glutathione disulfide + H2O. The catalysed reaction is (12R)-hydroperoxy-(5Z,8Z,10E,14Z)-eicosatetraenoate + 2 glutathione = (12R)-hydroxy-(5Z,8Z,10E,14Z)-eicosatetraenoate + glutathione disulfide + H2O. The enzyme catalyses (12S)-hydroperoxy-(5Z,8Z,10E,14Z)-eicosatetraenoate + 2 glutathione = (12S)-hydroxy-(5Z,8Z,10E,14Z)-eicosatetraenoate + glutathione disulfide + H2O. It catalyses the reaction (15S)-hydroperoxy-(5Z,8Z,11Z,13E)-eicosatetraenoate + 2 glutathione = (15S)-hydroxy-(5Z,8Z,11Z,13E)-eicosatetraenoate + glutathione disulfide + H2O. It carries out the reaction (5S)-hydroperoxy-(6E,8Z,11Z,14Z,17Z)-eicosapentaenoate + 2 glutathione = (5S)-hydroxy-(6E,8Z,11Z,14Z,17Z)-eicosapentaenoate + glutathione disulfide + H2O. The catalysed reaction is (12S)-hydroperoxy-(5Z,8Z,10E,14Z,17Z)-eicosapentaenoate + 2 glutathione = (12S)-hydroxy-(5Z,8Z,10E,14Z,17Z)-eicosapentaenoate + glutathione disulfide + H2O. The enzyme catalyses (15S)-hydroperoxy-(5Z,8Z,11Z,13E,17Z)-eicosapentaenoate + 2 glutathione = (15S)-hydroxy-(5Z,8Z,11Z,13E,17Z)-eicosapentaenoate + glutathione disulfide + H2O. It catalyses the reaction (15S)-hydroperoxy-(11Z,13E)-eicosadienoate + 2 glutathione = (15S)-hydroxy-(11Z,13E)-eicosadienoate + glutathione disulfide + H2O. It carries out the reaction (17S)-hydroperoxy-(4Z,7Z,10Z,13Z,15E,19Z)-docosahexaenoate + 2 glutathione = (17S)-hydroxy-(4Z,7Z,10Z,13Z,15E,19Z)-docosahexaenoate + glutathione disulfide + H2O. The catalysed reaction is a hydroperoxy-1,2-diacyl-glycero-3-phosphocholine + 2 glutathione = a hydroxy-1,2-diacyl-glycero-3-phosphocholine + glutathione disulfide + H2O. Its function is as follows. Essential antioxidant peroxidase that directly reduces phospholipid hydroperoxide even if they are incorporated in membranes and lipoproteins. Can also reduce fatty acid hydroperoxide, cholesterol hydroperoxide and thymine hydroperoxide. Plays a key role in protecting cells from oxidative damage by preventing membrane lipid peroxidation. Required to prevent cells from ferroptosis, a non-apoptotic cell death resulting from an iron-dependent accumulation of lipid reactive oxygen species. The presence of selenocysteine (Sec) versus Cys at the active site is essential for life: it provides resistance to overoxidation and prevents cells against ferroptosis. The presence of Sec at the active site is also essential for the survival of a specific type of parvalbumin-positive interneurons, thereby preventing against fatal epileptic seizures. May be required to protect cells from the toxicity of ingested lipid hydroperoxides. Required for normal sperm development and male fertility. Essential for maturation and survival of photoreceptor cells. Plays a role in a primary T-cell response to viral and parasitic infection by protecting T-cells from ferroptosis and by supporting T-cell expansion. Plays a role of glutathione peroxidase in platelets in the arachidonic acid metabolism. Reduces hydroperoxy ester lipids formed by a 15-lipoxygenase that may play a role as down-regulator of the cellular 15-lipoxygenase pathway. Can also reduce small soluble hydroperoxides such as H2O2, cumene hydroperoxide and tert-butyl hydroperoxide. The polypeptide is Phospholipid hydroperoxide glutathione peroxidase (Pongo pygmaeus (Bornean orangutan)).